We begin with the raw amino-acid sequence, 553 residues long: Solute carrier family 22 member 4 (553 aa).

Over 1 to 20 (MRDYDEVIAFLGEWGPFQRL) the chain is Cytoplasmic. A helical transmembrane segment spans residues 21-41 (IFFLLSASIIPNGFNGMSVVF). Residues 42-142 (LAGTPEHRCL…NLVCEDDWKT (101 aa)) are Extracellular-facing. Residues Asn-57, Asn-64, and Asn-91 are each glycosylated (N-linked (GlcNAc...) asparagine). The helical transmembrane segment at 143–163 (PLTTSLFFVGVLCGSFVSGQL) threads the bilayer. The Cytoplasmic segment spans residues 164–171 (SDRFGRKK). The chain crosses the membrane as a helical span at residues 172–192 (VLFATMAVQTGFSFVQIFSTN). Residues 193 to 197 (WEMFT) are Extracellular-facing. Residues 198 to 218 (VLFAIVGMGQISNYVVAFILG) traverse the membrane as a helical segment. Residue 218–225 (GTEILSKS) participates in ATP binding. Residues 219–232 (TEILSKSVRIIFST) lie on the Cytoplasmic side of the membrane. A helical membrane pass occupies residues 233–253 (LGVCTFFAIGYMVLPLFAYFI). Residues 254 to 257 (RDWR) lie on the Extracellular side of the membrane. A helical membrane pass occupies residues 258-278 (MLLLALTLPGLFCVPLWWFIP). Residues 279 to 339 (ESPRWLISQR…IILDLFRTRN (61 aa)) are Cytoplasmic-facing. Residues 340-360 (IATITVMAVMLWMLTSVGYFA) traverse the membrane as a helical segment. Residues 361-373 (LSLNVPNLHGDVY) lie on the Extracellular side of the membrane. The helical transmembrane segment at 374–394 (LNCFLSGLIEVPAYFTAWLLL) threads the bilayer. Over 395 to 400 (RTLPRR) the chain is Cytoplasmic. The chain crosses the membrane as a helical span at residues 401-421 (YIIAGVLFWGGGVLLLIQVVP). At 422–428 (EDYNFVS) the chain is on the extracellular side. Residues 429–449 (IGLVMLGKFGITSAFSMLYVF) form a helical membrane-spanning segment. The Cytoplasmic portion of the chain corresponds to 450-462 (TAELYPTLVRNMA). Residues 463–483 (VGITSMASRVGSIIAPYFVYL) form a helical membrane-spanning segment. Residues 484-488 (GAYNR) are Extracellular-facing. Residues 489–509 (LLPYILMGSLTVLIGIITLFF) form a helical membrane-spanning segment. The Cytoplasmic segment spans residues 510-553 (PESFGVTLPENLEQMQKVRGFRCGKKSTVSVDREESPKVLITAF).

The protein belongs to the major facilitator (TC 2.A.1) superfamily. Organic cation transporter (TC 2.A.1.19) family. As to quaternary structure, interacts with PDZK1. Expressed in kidney. Expressed in small intestines. Expressed in liver in non-parenchymal liver tissue such as sinusoidal vessels. Weakly expressed in lung and brain. Expressed in testis and spleen. Expressed in heart.

It localises to the apical cell membrane. The protein localises to the mitochondrion membrane. It is found in the basal cell membrane. The catalysed reaction is ergothioneine(out) + Na(+)(out) = ergothioneine(in) + Na(+)(in). It catalyses the reaction acetylcholine(in) = acetylcholine(out). The enzyme catalyses (R)-carnitine(out) + Na(+)(out) = (R)-carnitine(in) + Na(+)(in). It carries out the reaction glycine betaine(out) + Na(+)(out) = glycine betaine(in) + Na(+)(in). Its activity is regulated as follows. Allosterically activated by intracellular ATP. In terms of biological role, transporter that mediates the transport of endogenous and microbial zwitterions and organic cations. Functions as a Na(+)-dependent and pH-dependent high affinity microbial symporter of potent food-derived antioxidant ergothioeine. Transports one sodium ion with one ergothioeine molecule. Involved in the absorption of ergothioneine from the luminal/apical side of the small intestine and renal tubular cells, and into non-parenchymal liver cells, thereby contributing to maintain steady-state ergothioneine level in the body. Also mediates the bidirectional transport of acetycholine, although the exact transport mechanism has not been fully identified yet. Most likely exports anti-inflammatory acetylcholine in non-neuronal tissues, thereby contributing to the non-neuronal cholinergic system. Displays a general physiological role linked to better survival by controlling inflammation and oxidative stress, which may be related to ergothioneine and acetycholine transports. May also function as a low-affinity Na(+)-dependent transporter of L-carnitine through the mitochondrial membrane, thereby maintaining intracellular carnitine homeostasis. May contribute to regulate the transport of cationic compounds in testis across the blood-testis-barrier. The sequence is that of Solute carrier family 22 member 4 from Mus musculus (Mouse).